The chain runs to 1098 residues: Ran-binding protein 16 (1098 aa).

It belongs to the exportin family. As to quaternary structure, binds to nucleoporins and the GTP-bound form of Ran.

Its subcellular location is the cytoplasm. The protein localises to the nucleus. Functionally, may function as a nuclear transport receptor. This is Ran-binding protein 16 (Ranbp16) from Drosophila melanogaster (Fruit fly).